The sequence spans 232 residues: Putative N-acetylmannosamine-6-phosphate 2-epimerase (232 aa).

This sequence belongs to the NanE family.

The catalysed reaction is an N-acyl-D-glucosamine 6-phosphate = an N-acyl-D-mannosamine 6-phosphate. Its pathway is amino-sugar metabolism; N-acetylneuraminate degradation; D-fructose 6-phosphate from N-acetylneuraminate: step 3/5. Converts N-acetylmannosamine-6-phosphate (ManNAc-6-P) to N-acetylglucosamine-6-phosphate (GlcNAc-6-P). The protein is Putative N-acetylmannosamine-6-phosphate 2-epimerase of Borrelia garinii subsp. bavariensis (strain ATCC BAA-2496 / DSM 23469 / PBi) (Borreliella bavariensis).